The following is a 1025-amino-acid chain: Multidrug resistance protein MdtC (1025 aa).

Helical transmembrane passes span 3–23 (FFAL…AITL), 333–353 (EVEQ…FLFL), 360–380 (LIPA…MYLC), 387–407 (LSLM…IVVL), 431–451 (VGFT…PLLL), 463–483 (FAVT…TLTP), 528–548 (IVGL…ITIP), 853–873 (VILI…LYES), 875–895 (VHPL…LLAL), 897–917 (LFDA…IGIV), 953–973 (PIMM…ISSG), and 984–1004 (ITIV…TPVV).

The protein belongs to the resistance-nodulation-cell division (RND) (TC 2.A.6) family. MdtC subfamily. As to quaternary structure, part of a tripartite efflux system composed of MdtA, MdtB and MdtC. MdtC forms a heteromultimer with MdtB.

The protein resides in the cell inner membrane. In Enterobacter sp. (strain 638), this protein is Multidrug resistance protein MdtC.